A 1940-amino-acid polypeptide reads, in one-letter code: MSSNYALPDVFRAMAVLTGALAKAYSVLPNDSSKTSNASDVAEASLDVARAFEEASQILKTAVSSPVVARALSETQNNGTLHDQLNSSVQNIAKASTEFSAMGDIFKYQAKAQVSLAQIKACSNAQCSPETVESNFQEAIRDYEAASSIALQYGFQSLAEQLSDAVNQLKTALSNYEKTVATLQQIKQAQASGNYWQVLNLALSLASNQQNTQSSKNIAQAANNLKSALNAPLNSNNMSQYYSNVVSAIQSFPRCTQVSTLVTTTSAVIAIQRLLQLGSSELQKAQQATQALLQSAEQMWSSAYNHAEKAYEAFSLAEQLASQFVSQELANEIEKGLEKVKQFVAEAQANMNANKNILADAFNTVVDNISNAVNDLMNWVNDLIETHIPGIVGQILAGVVDGLIFVVISLIPGVGQIIDGIIAFSFISNLVEQGIIAVKTGYGAQFLQQLEESFLQPQNIAMIATSVIGGIGLERVLADRLPDIRIGAIDAAKEKIGDLMSDFKEKISIGLHGISDDASKVLDDIKTKIKGNAVSLRDVGSTIVEKKIEVKAPDITKIDVKPEEITAKNVNVKLVKPLSTDLAKQLSEKFKSVKNLKDLKAIVKVDKEFRIPYDLQGKSMGDKTVLTADYMEGEVLGLIKNYEADVKISPTSFEKTIKGAELKPPELHAKLSSFDYTGKGILDVEQDIIDAIKTSKDISLTSDGKGVAITTDKATTIVPVKKYFDAIMTGYAKGDFSDVKVAELLSKVNSSDLARLMTDDIIKKLKDYKGSGELKIGDLVIAKEIKGDKTLYSVAKIGPDGKPQSINVVSDIDDPMFRATVYNNLLDMVKNKTEFDYLVTNLNKMKSLSPDLQTTLDRLTVKPGERSISIEGSGGKYLNVTEKSLPGGSEIRAETNLEGVKAVDALEKELDGERQATLEQLLESYKNGGFRDVKALADALGKIDKLPDTLKEALAKYFDRKMENSSLEEEVDLIKGLPKMYEDLKTKVIDPVDTFLNKLKAKGAPESEIDALRQLFYKRVLNEINAGRSLDTIDLASAFVKANEVLDKVDDVVKDLKDRGLPDNLVNDIKASMFKQIEKDVLSGKPLDINRIEFDVLRQKEDAIFNFVLDKFGFDKNLLKNLTPDQLDRFKTNVVDQFLLKHITDKNDLMDEYNNIVKGPSKVQNTTQPSATQNTTTQPTAQNTSLPGATQNTTLPTPSKVQNTTQPSTTPNTTLSTPSTTPNTTTQPTVQNTSLPGAVQNITPKDLQSIVKDPKVLDEINATVEKLKDLGLPDKLVDDIKASIFKKIENDALSGKPIDINNIWTNILMQKEDAIFNFVLDKFGFDKNLLKNLTPEQLAKFKTDVVTDFMTNRIVDKTDLMQTYMDVKATVKGPGTTQNTTTPSVAQNITLKDLQSIVKDPKVLEQVDATIKRLKDLGLPDKLVDDIKASMLEQIKKDALSGKPIDINNIWTNILMQKEDAIFDFVLDKFGFDKDLLKNLTPEQLAKFKTDVVTDFMTNRIVDKTDLMQTYMDAKTLVKGPSTTQNTTQPSTTPNMTPPKIEFKDQNVKPPGTGAGTDVNTPGSGSQTVTSGSGLQLLVKPKEIAAQEEKIKLKDLQSILPEETLERFEKLPDSLKEKVIDEIETRLRGKKVDEIEGIVNDVIDKYEKLYDSAVKDGMLNDLKNLIDAYSKKDNNATEVLTDVGKSLEVLKDLNKSVGTSVVEEAKYNSTLQTYLAGLGIKDLNNVSDKQLIKIGTDVTNTLSEKFGTPVVVLTPEEAKILVKELNDTLNDTGLNTKFKIEEVKPLPKTLEVILATLGIKNETKQRILLKELQKKLPKIRITDLIVISSKGTITPITWDDIMPTYYTNVQGQTLPIYTTQTTTTHHITPPPPPPPPPPPPPPKTQTITTTTQITPPSPPPTPPPPPPPPKSPKMPASLSPSSGNAPSEAEAEQAEQVLLI.

TPR repeat units follow at residues 119–153 (IKACSNAQCSPETVESNFQEAIRDYEAASSIALQY), 155–186 (FQSLAEQLSDAVNQLKTALSNYEKTVATLQQI), 480–513 (RLPDIRIGAIDAAKEKIGDLMSDFKEKISIGLHG), and 617–652 (GKSMGDKTVLTADYMEGEVLGLIKNYEADVKISPTS). Disordered stretches follow at residues 1160-1239 (PSKV…PGAV) and 1519-1571 (KGPS…TVTS). Low complexity predominate over residues 1164–1185 (QNTTQPSATQNTTTQPTAQNTS). Polar residues predominate over residues 1186-1200 (LPGATQNTTLPTPSK). Low complexity-rich tracts occupy residues 1201-1235 (VQNTTQPSTTPNTTLSTPSTTPNTTTQPTVQNTSL), 1521-1539 (PSTTQNTTQPSTTPNMTPP), and 1561-1571 (TPGSGSQTVTS). Residues 1691–1724 (KDLNKSVGTSVVEEAKYNSTLQTYLAGLGIKDLN) form a TPR 5 repeat. The tract at residues 1862–1940 (TTTHHITPPP…AEQAEQVLLI (79 aa)) is disordered. Residues 1868-1883 (TPPPPPPPPPPPPPPK) are compositionally biased toward pro residues. Low complexity predominate over residues 1884 to 1894 (TQTITTTTQIT). Over residues 1895–1912 (PPSPPPTPPPPPPPPKSP) the composition is skewed to pro residues.

In Acidianus convivator (ATV), this protein is Protein ORF1940.